The chain runs to 339 residues: AT-hook motif nuclear-localized protein 26 (339 aa).

Positions 1–12 (MDPVQSHGSQSS) are enriched in polar residues. Disordered regions lie at residues 1–132 (MDPV…NKPK) and 273–339 (MQTP…RPPY). Low complexity predominate over residues 24 to 45 (LHLQQQQQHQQQHQQQQQQQFF). The span at 82-93 (NMDNIANTNSGS) shows a compositional bias: polar residues. Over residues 102 to 113 (GGEGGSGGGGSG) the composition is skewed to gly residues. Residues 118 to 130 (RRPRGRPAGSKNK) constitute a DNA-binding region (a.T hook). The 138-residue stretch at 142–279 (ANALRTHVME…EDEMQTPVQG (138 aa)) folds into the PPC domain. A compositionally biased stretch (gly residues) spans 278 to 291 (QGGGGGGGGGGGMG). Residues 292-310 (SPPMMGQQQAMAAMAAAQG) show a composition bias toward low complexity.

Its subcellular location is the nucleus. Functionally, transcription factor that specifically binds AT-rich DNA sequences related to the nuclear matrix attachment regions (MARs). The sequence is that of AT-hook motif nuclear-localized protein 26 from Arabidopsis thaliana (Mouse-ear cress).